A 428-amino-acid chain; its full sequence is Trigger factor (428 aa).

The PPIase FKBP-type domain occupies 163–248 (GDIVDIDFEG…VNDVKVKELP (86 aa)).

This sequence belongs to the FKBP-type PPIase family. Tig subfamily.

It is found in the cytoplasm. It catalyses the reaction [protein]-peptidylproline (omega=180) = [protein]-peptidylproline (omega=0). In terms of biological role, involved in protein export. Acts as a chaperone by maintaining the newly synthesized protein in an open conformation. Functions as a peptidyl-prolyl cis-trans isomerase. This chain is Trigger factor, found in Acetivibrio thermocellus (strain ATCC 27405 / DSM 1237 / JCM 9322 / NBRC 103400 / NCIMB 10682 / NRRL B-4536 / VPI 7372) (Clostridium thermocellum).